Consider the following 139-residue polypeptide: ATP synthase epsilon chain 2 (139 aa).

This sequence belongs to the ATPase epsilon chain family. F-type ATPases have 2 components, CF(1) - the catalytic core - and CF(0) - the membrane proton channel. CF(1) has five subunits: alpha(3), beta(3), gamma(1), delta(1), epsilon(1). CF(0) has three main subunits: a, b and c.

It is found in the cell inner membrane. Produces ATP from ADP in the presence of a proton gradient across the membrane. This Paraburkholderia xenovorans (strain LB400) protein is ATP synthase epsilon chain 2.